A 435-amino-acid chain; its full sequence is Transcription activator ACTTR (435 aa).

Residues 16 to 43 (CDFCTQSKLRCNKNKPSCRRCTIQQQPC) constitute a DNA-binding region (zn(2)-C6 fungal-type). The tract at residues 48–89 (ARRTGRPPKRPRKANDGQEANEQHGDQDPVTSTPGGSCQQQS) is disordered. The span at 50–59 (RTGRPPKRPR) shows a compositional bias: basic residues. The span at 60–74 (KANDGQEANEQHGDQ) shows a compositional bias: basic and acidic residues. Over residues 76-89 (PVTSTPGGSCQQQS) the composition is skewed to polar residues.

Its subcellular location is the nucleus. Functionally, transcription factor that regulates the expression of the gene clusters that mediate the biosynthesis of the host-selective toxins (HSTs) ACT-toxins responsible for brown spot of tangerine disease by the tangerine pathotype which affects tangerines and mandarins. ACT-toxins consist of three moieties, 9,10-epoxy-8-hydroxy-9-methyl-decatrienoic acid (EDA), valine and a polyketide. ACT-toxin I is toxic to both citrus and pear; toxin II the 5''-deoxy derivative of ACT-toxin I, is highly toxic to pear and slightly toxic to citrus. On cellular level, ACT-toxins affect plasma membrane of susceptible cells and cause a sudden increase in loss of K(+) after a few minutes of toxin treatment. The protein is Transcription activator ACTTR of Alternaria alternata (Alternaria rot fungus).